The primary structure comprises 470 residues: MNPNQKIITIGSVSLGLVVLNILLHIVSITITVLVLPGNGNSGNCNETIIREYNETVRIEKVTQRHNTNVIEYIERPESDHFMNNTEPLCDAKGFAPFSKDNGIRIGSRGHIFVIREPFVSCSPTECRTFFLTQGSLLNDKHSNGTVKDRSPYRTLMSVEIGQSPNVYQARFEAVAWSATACHDGKKWMTIGVTGPDAKAVAVVHYGGIPTDVINSWAGNILRTQESSCTCIQGECYWVMTDGPANRQAQYRVFKAKQGKIIGQTEISFNGGHIEECSCYPNEGKVECVCRDNWTGTNRPVLVISSDLSYRVGYLCAGLPSDTPRGEDSQFTGSCTSPMGNQGYGVKGFGFRQGNDVWMGRTISRTSRSGFEILKIRNGWTQNSKEQIKKQVVVDNLNWSGYSGSFTLPVELTKRNCLVPCFWVEMIRGKPEEKTIWTSSSSIVMCGVEHEIADWSWHDGAILPFDIDKM.

Residues 1–14 (MNPNQKIITIGSVS) lie on the Intravirion side of the membrane. The involved in apical transport and lipid raft association stretch occupies residues 11–32 (GSVSLGLVVLNILLHIVSITIT). Residues 15–35 (LGLVVLNILLHIVSITITVLV) form a helical membrane-spanning segment. The tract at residues 32 to 86 (TVLVLPGNGNSGNCNETIIREYNETVRIEKVTQRHNTNVIEYIERPESDHFMNNT) is hypervariable stalk region. Over 36-470 (LPGNGNSGNC…AILPFDIDKM (435 aa)) the chain is Virion surface. N-linked (GlcNAc...) asparagine; by host glycosylation is found at Asn46, Asn54, and Asn84. A head of neuraminidase region spans residues 89 to 470 (LCDAKGFAPF…AILPFDIDKM (382 aa)). Cystine bridges form between Cys90/Cys417, Cys122/Cys127, Cys182/Cys229, Cys231/Cys236, Cys277/Cys290, Cys279/Cys288, Cys316/Cys335, and Cys421/Cys446. Arg116 serves as a coordination point for substrate. Asn144 carries an N-linked (GlcNAc...) asparagine; by host glycan. Catalysis depends on Asp149, which acts as the Proton donor/acceptor. Arg150 is a binding site for substrate. Substrate is bound at residue 275–276 (EE). Arg291 contributes to the substrate binding site. A Ca(2+)-binding site is contributed by Asp292. Asn293 is a glycosylation site (N-linked (GlcNAc...) asparagine; by host). Ca(2+)-binding residues include Gly296 and Asp322. Position 368 (Arg368) interacts with substrate. N-linked (GlcNAc...) asparagine; by host glycosylation occurs at Asn398. Residue Tyr402 is the Nucleophile of the active site.

The protein belongs to the glycosyl hydrolase 34 family. Homotetramer. It depends on Ca(2+) as a cofactor. In terms of processing, N-glycosylated.

It localises to the virion membrane. The protein localises to the host apical cell membrane. It catalyses the reaction Hydrolysis of alpha-(2-&gt;3)-, alpha-(2-&gt;6)-, alpha-(2-&gt;8)- glycosidic linkages of terminal sialic acid residues in oligosaccharides, glycoproteins, glycolipids, colominic acid and synthetic substrates.. Its activity is regulated as follows. Inhibited by the neuraminidase inhibitors zanamivir (Relenza) and oseltamivir (Tamiflu). These drugs interfere with the release of progeny virus from infected cells and are effective against all influenza strains. Resistance to neuraminidase inhibitors is quite rare. Its function is as follows. Catalyzes the removal of terminal sialic acid residues from viral and cellular glycoconjugates. Cleaves off the terminal sialic acids on the glycosylated HA during virus budding to facilitate virus release. Additionally helps virus spread through the circulation by further removing sialic acids from the cell surface. These cleavages prevent self-aggregation and ensure the efficient spread of the progeny virus from cell to cell. Otherwise, infection would be limited to one round of replication. Described as a receptor-destroying enzyme because it cleaves a terminal sialic acid from the cellular receptors. May facilitate viral invasion of the upper airways by cleaving the sialic acid moieties on the mucin of the airway epithelial cells. Likely to plays a role in the budding process through its association with lipid rafts during intracellular transport. May additionally display a raft-association independent effect on budding. Plays a role in the determination of host range restriction on replication and virulence. Sialidase activity in late endosome/lysosome traffic seems to enhance virus replication. The chain is Neuraminidase from Influenza A virus (strain A/Turkey/Minnesota/501/1978 H6N8).